The following is a 144-amino-acid chain: Large ribosomal subunit protein uL15 (144 aa).

The interval 1 to 56 (MELNNLKPAAGAKHAKRRVGRGIGSGLGKTAGRGHKGQKSRSGGFHKVGFEGGQMP) is disordered. The segment covering 21–31 (RGIGSGLGKTA) has biased composition (gly residues).

This sequence belongs to the universal ribosomal protein uL15 family. In terms of assembly, part of the 50S ribosomal subunit.

In terms of biological role, binds to the 23S rRNA. The polypeptide is Large ribosomal subunit protein uL15 (Burkholderia multivorans (strain ATCC 17616 / 249)).